We begin with the raw amino-acid sequence, 632 residues long: Sporulenol synthase (632 aa).

Aspartate 377 serves as the catalytic Proton donor. PFTB repeat units follow at residues 395-436 (WERG…EDAA), 465-505 (IQRA…HACG), and 513-554 (IQKA…VQTA).

It belongs to the terpene cyclase/mutase family.

The protein localises to the cell membrane. It carries out the reaction sporulenol = (R)-tetraprenyl-beta-curcumene + H2O. It functions in the pathway secondary metabolite biosynthesis; hopanoid biosynthesis. In terms of biological role, catalyzes the cyclization of tetraprenyl beta-curcumene into sporulenol. The chain is Sporulenol synthase (sqhC) from Bacillus subtilis (strain 168).